The following is a 150-amino-acid chain: Large ribosomal subunit protein bL9 (150 aa).

Belongs to the bacterial ribosomal protein bL9 family.

In terms of biological role, binds to the 23S rRNA. This chain is Large ribosomal subunit protein bL9, found in Lactococcus lactis subsp. cremoris (strain SK11).